A 580-amino-acid chain; its full sequence is N(6)-adenosine-methyltransferase catalytic subunit METTL3 (580 aa).

The disordered stretch occupies residues 1–70; sequence MSDTWSSIQA…PKPSTTSVAP (70 aa). The residue at position 2 (Ser-2) is an N-acetylserine; alternate. A Phosphoserine; alternate modification is found at Ser-2. A compositionally biased stretch (basic and acidic residues) spans 28–37; the sequence is QDSGHLDLRN. Phosphoserine occurs at positions 43, 48, and 50. The span at 55 to 67 shows a compositional bias: low complexity; that stretch reads APTSSGPKPSTTS. Glycyl lysine isopeptide (Lys-Gly) (interchain with G-Cter in SUMO1) cross-links involve residues Lys-177, Lys-211, Lys-212, and Lys-215. Residues 198 to 217 form a disordered region; sequence LASSASEPAKEPAKKSRKHA. Residues 210–215 carry the Nuclear localization signal motif; that stretch reads AKKSRK. 3 positions are modified to phosphoserine: Ser-219, Ser-243, and Ser-350. Residues 377–378 and Asp-395 each bind S-adenosyl-L-methionine; that span reads DI. The tract at residues 396–410 is gate loop 1; the sequence is PPWDIHMELPYGTLT. Interaction with METTL14 stretches follow at residues 450–454 and 464–480; these read ERVDE and QRII…NHGK. The tract at residues 462–479 is interphase loop; it reads QLQRIIRTGRTGHWLNHG. The interval 465–478 is positively charged region required for RNA-binding; it reads RIIRTGRTGHWLNH. The gate loop 2 stretch occupies residues 507-515; it reads VRSTSHKPD. S-adenosyl-L-methionine-binding positions include Lys-513, 536–539, and 549–550; these read RPHN and NQ.

It belongs to the MT-A70-like family. Heterodimer; heterodimerizes with METTL14 to form an antiparallel heterodimer that constitutes an active methyltransferase. Component of the WMM complex, a N6-methyltransferase complex composed of a catalytic subcomplex, named MAC, and of an associated subcomplex, named MACOM. The MAC subcomplex is composed of METTL3 and METTL14. The MACOM subcomplex is composed of WTAP, ZC3H13, CBLL1/HAKAI, VIRMA, and, in some cases of RBM15 (RBM15 or RBM15B). Interacts with NCBP1/CBP80. Interacts with EIF4E. Interacts with EIF3B. Post-translationally, sumoylation inhibits the N6-adenosine-methyltransferase activity. Sumoylation does not affect subcellular location or interaction with METTL14. Desumoylated by SENP1. In terms of tissue distribution, present in both germ cells and somatic cells during testis development (at protein level).

The protein localises to the nucleus. Its subcellular location is the nucleus speckle. It localises to the cytoplasm. It carries out the reaction an adenosine in mRNA + S-adenosyl-L-methionine = an N(6)-methyladenosine in mRNA + S-adenosyl-L-homocysteine + H(+). With respect to regulation, methyltransferase activity is regulated by miRNAs via a sequence pairing mechanism. Methyltransferase activity is inhibited by sumoylation. Its function is as follows. The METTL3-METTL14 heterodimer forms a N6-methyltransferase complex that methylates adenosine residues at the N(6) position of some RNAs and regulates various processes such as the circadian clock, differentiation of embryonic and hematopoietic stem cells, cortical neurogenesis, response to DNA damage, differentiation of T-cells and primary miRNA processing. In the heterodimer formed with METTL14, METTL3 constitutes the catalytic core. N6-methyladenosine (m6A), which takes place at the 5'-[AG]GAC-3' consensus sites of some mRNAs, plays a role in mRNA stability, processing, translation efficiency and editing. M6A acts as a key regulator of mRNA stability: methylation is completed upon the release of mRNA into the nucleoplasm and promotes mRNA destabilization and degradation. In embryonic stem cells (ESCs), m6A methylation of mRNAs encoding key naive pluripotency-promoting transcripts results in transcript destabilization, promoting differentiation of ESCs. M6A regulates the length of the circadian clock: acts as an early pace-setter in the circadian loop by putting mRNA production on a fast-track for facilitating nuclear processing, thereby providing an early point of control in setting the dynamics of the feedback loop. M6A also regulates circadian regulation of hepatic lipid metabolism. M6A regulates spermatogonial differentiation and meiosis and is essential for male fertility and spermatogenesis. Also required for oogenesis. Involved in the response to DNA damage: in response to ultraviolet irradiation, METTL3 rapidly catalyzes the formation of m6A on poly(A) transcripts at DNA damage sites, leading to the recruitment of POLK to DNA damage sites. M6A is also required for T-cell homeostasis and differentiation: m6A methylation of transcripts of SOCS family members (SOCS1, SOCS3 and CISH) in naive T-cells promotes mRNA destabilization and degradation, promoting T-cell differentiation. Inhibits the type I interferon response by mediating m6A methylation of IFNB. M6A also regulates cortical neurogenesis: m6A methylation of transcripts related to transcription factors, neural stem cells, the cell cycle and neuronal differentiation during brain development promotes their destabilization and decay, promoting differentiation of radial glial cells. M6A also takes place in other RNA molecules, such as primary miRNA (pri-miRNAs). Mediates m6A methylation of Xist RNA, thereby participating in random X inactivation: m6A methylation of Xist leads to target YTHDC1 reader on Xist and promote transcription repression activity of Xist. METTL3 mediates methylation of pri-miRNAs, marking them for recognition and processing by DGCR8. Acts as a positive regulator of mRNA translation independently of the methyltransferase activity: promotes translation by interacting with the translation initiation machinery in the cytoplasm. This Mus musculus (Mouse) protein is N(6)-adenosine-methyltransferase catalytic subunit METTL3.